The sequence spans 72 residues: Translation initiation factor IF-1 (72 aa).

Residues 1–72 (MAKEDVIEMQ…SKGRIVFRAR (72 aa)) form the S1-like domain.

It belongs to the IF-1 family. As to quaternary structure, component of the 30S ribosomal translation pre-initiation complex which assembles on the 30S ribosome in the order IF-2 and IF-3, IF-1 and N-formylmethionyl-tRNA(fMet); mRNA recruitment can occur at any time during PIC assembly.

Its subcellular location is the cytoplasm. Functionally, one of the essential components for the initiation of protein synthesis. Stabilizes the binding of IF-2 and IF-3 on the 30S subunit to which N-formylmethionyl-tRNA(fMet) subsequently binds. Helps modulate mRNA selection, yielding the 30S pre-initiation complex (PIC). Upon addition of the 50S ribosomal subunit IF-1, IF-2 and IF-3 are released leaving the mature 70S translation initiation complex. The protein is Translation initiation factor IF-1 of Photobacterium profundum (strain SS9).